Consider the following 116-residue polypeptide: Large ribosomal subunit protein bL17 (116 aa).

This sequence belongs to the bacterial ribosomal protein bL17 family. In terms of assembly, part of the 50S ribosomal subunit. Contacts protein L32.

The polypeptide is Large ribosomal subunit protein bL17 (Wolinella succinogenes (strain ATCC 29543 / DSM 1740 / CCUG 13145 / JCM 31913 / LMG 7466 / NCTC 11488 / FDC 602W) (Vibrio succinogenes)).